The sequence spans 1209 residues: Calcium-activated potassium channel subunit alpha-1 (1209 aa).

Gly residues predominate over residues 1–23; sequence MANGGGGGGGSSGGGGGGGGGSG. Residues 1–61 are disordered; the sequence is MANGGGGGGG…SSSSSSSSSV (61 aa). The Extracellular segment spans residues 1-86; that stretch reads MANGGGGGGG…VPCDSRGQRM (86 aa). The span at 25–39 shows a compositional bias: polar residues; sequence RMSSNIHANNLSLDA. The span at 40–60 shows a compositional bias: low complexity; the sequence is SSSSSSSSSSSSSSSSSSSSS. Residues 87–107 traverse the membrane as a helical segment; sequence WWAFLASSMVTFFGGLFIILL. Residues 108–178 are Cytoplasmic-facing; sequence WRTLKYLWTV…MISAQTLTGR (71 aa). Residues Cys118, Cys119, and Cys121 are each lipidated (S-palmitoyl cysteine). Residues 179–199 form a helical membrane-spanning segment; sequence VLVVLVFALSIGALVIYFIDS. The Extracellular portion of the chain corresponds to 200-214; it reads SNPIESCQNFYKDFT. A helical transmembrane segment spans residues 215-235; that stretch reads LQIDMAFNVFFLLYFGLRFIA. Residues 236–239 are Cytoplasmic-facing; sequence ANDK. A helical transmembrane segment spans residues 240 to 260; it reads LWFWLEVNSVVDFFTVPPVFV. At 261–264 the chain is on the extracellular side; that stretch reads SVYL. A helical; Voltage-sensor membrane pass occupies residues 265-285; that stretch reads NRSWLGLRFLRALRLIQFSEI. At 286 to 300 the chain is on the cytoplasmic side; it reads LQFLNILKTSNSIKL. A helical transmembrane segment spans residues 301–321; sequence VNLLSIFISTWLTAAGFIHLV. The Extracellular segment spans residues 322-335; that stretch reads ENSGDPWENFQNNQ. The pore-forming intramembrane region spans 336–358; that stretch reads ALTYWECVYLLMVTMSTVGYGDV. The Selectivity for potassium motif lies at 352 to 355; the sequence is TVGY. Over 359–367 the chain is Extracellular; that stretch reads YAKTTLGRL. Residues 368–388 form a helical membrane-spanning segment; it reads FMVFFILGGLAMFASYVPEII. At 389–1209 the chain is on the cytoplasmic side; it reads ELIGNRKKYG…KQNRKEMVYR (821 aa). The 143-residue stretch at 407–549 folds into the RCK N-terminal 1 domain; the sequence is RKHIVVCGHI…WNWKEGDDAI (143 aa). Residues Glu439, Gln462, and Glu464 each coordinate Mg(2+). Residues 556–576 are segment S7; that stretch reads LGFIAQSCLAQGLSTMLANLF. Positions 613-633 are segment S8; the sequence is LSFPTVCELCFVKLKLLMIAI. At Asp670 the chain carries Phosphothreonine. Position 672 is a phosphoserine (Lys672). The heme-binding motif stretch occupies residues 681–685; that stretch reads CKACH. Positions 703 to 733 are disordered; sequence EDEQPPTLSPKKKQRNGGMRNSPNTSPKLMR. Position 709 is a phosphothreonine (Thr709). A phosphoserine mark is found at Ser711, Ser724, and Ser728. The segment at 783–803 is segment S9; sequence VLSGHVVVCIFGDVSSALIGL. In terms of domain architecture, RCK N-terminal 2 spans 785-929; the sequence is SGHVVVCIFG…MDRSSPDNSP (145 aa). The residue at position 916 (Thr916) is a Phosphothreonine. Phosphoserine is present on residues Ser924 and Ser928. Positions 976–998 match the Calcium bowl motif; the sequence is TELVNDTNVQFLDQDDDDDPDTE. Ca(2+) contacts are provided by Gln985, Asp988, Asp991, and Asp993. The segment S10 stretch occupies residues 1005–1025; the sequence is FACGTAFAVSVLDSLMSATYF. The segment covering 1159–1184 has biased composition (low complexity); it reads RASLSHSSHSSQSSSKKSSSVHSIPS. The disordered stretch occupies residues 1159 to 1209; sequence RASLSHSSHSSQSSSKKSSSVHSIPSTANRPNRPKSRESRDKQNRKEMVYR. Residues 1193–1209 are compositionally biased toward basic and acidic residues; sequence KSRESRDKQNRKEMVYR. A phosphoserine mark is found at Ser1194 and Ser1197.

Belongs to the potassium channel family. Calcium-activated (TC 1.A.1.3) subfamily. KCa1.1/KCNMA1 sub-subfamily. Homotetramer; which constitutes the calcium-activated potassium channel. Interacts with beta subunits KCNMB1, KCNMB2, KCNMB3 and KCNMB4. Interacts with gamma subunits LRRC26, LRRC38, LRRC52 and LRRC55. Beta and gamma subunits are accessory, and modulate its activity. Interacts with RAB11B. Phosphorylated. Phosphorylation by kinases such as PKA and/or PKG. In smooth muscles, phosphorylation affects its activity. Post-translationally, palmitoylation by ZDHHC22 and ZDHHC23 within the intracellular linker between the S0 and S1 transmembrane domains regulates localization to the plasma membrane. Depalmitoylated by LYPLA1 and LYPLAL1, leading to retard exit from the trans-Golgi network.

Its subcellular location is the cell membrane. The catalysed reaction is K(+)(in) = K(+)(out). With respect to regulation, ethanol and carbon monoxide-bound heme increase channel activation. Heme inhibits channel activation. Functionally, potassium channel activated by both membrane depolarization or increase in cytosolic Ca(2+) that mediates export of K(+). It is also activated by the concentration of cytosolic Mg(2+). Its activation dampens the excitatory events that elevate the cytosolic Ca(2+) concentration and/or depolarize the cell membrane. It therefore contributes to repolarization of the membrane potential. Plays a key role in controlling excitability in a number of systems, such as regulation of the contraction of smooth muscle, the tuning of hair cells in the cochlea, regulation of transmitter release, and innate immunity. In smooth muscles, its activation by high level of Ca(2+), caused by ryanodine receptors in the sarcoplasmic reticulum, regulates the membrane potential. In cochlea cells, its number and kinetic properties partly determine the characteristic frequency of each hair cell and thereby helps to establish a tonotopic map. Kinetics of KCNMA1 channels are determined by alternative splicing, phosphorylation status and its combination with modulating beta subunits. Highly sensitive to both iberiotoxin (IbTx) and charybdotoxin (CTX). Potassium channel activated by both membrane depolarization or increase in cytosolic Ca(2+) that mediates export of K(+). This Mus musculus (Mouse) protein is Calcium-activated potassium channel subunit alpha-1 (Kcnma1).